The primary structure comprises 303 residues: Methionyl-tRNA formyltransferase (303 aa).

110-113 (SLLP) serves as a coordination point for (6S)-5,6,7,8-tetrahydrofolate.

This sequence belongs to the Fmt family.

The enzyme catalyses L-methionyl-tRNA(fMet) + (6R)-10-formyltetrahydrofolate = N-formyl-L-methionyl-tRNA(fMet) + (6S)-5,6,7,8-tetrahydrofolate + H(+). In terms of biological role, attaches a formyl group to the free amino group of methionyl-tRNA(fMet). The formyl group appears to play a dual role in the initiator identity of N-formylmethionyl-tRNA by promoting its recognition by IF2 and preventing the misappropriation of this tRNA by the elongation apparatus. This is Methionyl-tRNA formyltransferase from Ehrlichia ruminantium (strain Welgevonden).